The chain runs to 721 residues: Polyribonucleotide nucleotidyltransferase (721 aa).

Residues D495 and D501 each coordinate Mg(2+). The KH domain maps to 562–621 (PRITTIKIRPERIKDIIGPGGKTIKDITARTGTSINIEDDGSVSIASPNQDKVEEAIKMI). The S1 motif domain maps to 631–699 (GRIYLGTVRK…RSGKIRLSRK (69 aa)). Residues 699–721 (KEALADSAKKSEGTEPPKGEPAK) form a disordered region.

This sequence belongs to the polyribonucleotide nucleotidyltransferase family. Requires Mg(2+) as cofactor.

The protein localises to the cytoplasm. It catalyses the reaction RNA(n+1) + phosphate = RNA(n) + a ribonucleoside 5'-diphosphate. In terms of biological role, involved in mRNA degradation. Catalyzes the phosphorolysis of single-stranded polyribonucleotides processively in the 3'- to 5'-direction. This is Polyribonucleotide nucleotidyltransferase from Anaeromyxobacter sp. (strain K).